The following is a 536-amino-acid chain: Apolipoprotein N-acyltransferase (536 aa).

The next 6 membrane-spanning stretches (helical) occupy residues 34–54 (PLWW…RPGA), 64–84 (ALIG…WLFI), 89–109 (YGAL…AFLA), 129–149 (GAAL…GSLW), 172–192 (YVGV…CVQW), and 199–219 (HWPM…AAVQ). In terms of domain architecture, CN hydrolase spans 244–487 (LQGNIAQDEK…RGVLRGQVHG (244 aa)). The Proton acceptor role is filled by Glu283. Lys345 is a catalytic residue. Catalysis depends on Cys395, which acts as the Nucleophile. Residues 503–523 (WWVARWGLWPLWALAALALAW) traverse the membrane as a helical segment.

Belongs to the CN hydrolase family. Apolipoprotein N-acyltransferase subfamily.

The protein localises to the cell inner membrane. It catalyses the reaction N-terminal S-1,2-diacyl-sn-glyceryl-L-cysteinyl-[lipoprotein] + a glycerophospholipid = N-acyl-S-1,2-diacyl-sn-glyceryl-L-cysteinyl-[lipoprotein] + a 2-acyl-sn-glycero-3-phospholipid + H(+). It functions in the pathway protein modification; lipoprotein biosynthesis (N-acyl transfer). Catalyzes the phospholipid dependent N-acylation of the N-terminal cysteine of apolipoprotein, the last step in lipoprotein maturation. The protein is Apolipoprotein N-acyltransferase of Verminephrobacter eiseniae (strain EF01-2).